We begin with the raw amino-acid sequence, 360 residues long: UDP-N-acetylglucosamine--N-acetylmuramyl-(pentapeptide) pyrophosphoryl-undecaprenol N-acetylglucosamine transferase (360 aa).

Residues S198 and Q289 each coordinate UDP-N-acetyl-alpha-D-glucosamine.

It belongs to the glycosyltransferase 28 family. MurG subfamily.

The protein resides in the cell membrane. The enzyme catalyses Mur2Ac(oyl-L-Ala-gamma-D-Glu-L-Lys-D-Ala-D-Ala)-di-trans,octa-cis-undecaprenyl diphosphate + UDP-N-acetyl-alpha-D-glucosamine = beta-D-GlcNAc-(1-&gt;4)-Mur2Ac(oyl-L-Ala-gamma-D-Glu-L-Lys-D-Ala-D-Ala)-di-trans,octa-cis-undecaprenyl diphosphate + UDP + H(+). It participates in cell wall biogenesis; peptidoglycan biosynthesis. Functionally, cell wall formation. Catalyzes the transfer of a GlcNAc subunit on undecaprenyl-pyrophosphoryl-MurNAc-pentapeptide (lipid intermediate I) to form undecaprenyl-pyrophosphoryl-MurNAc-(pentapeptide)GlcNAc (lipid intermediate II). In Streptococcus pyogenes serotype M5 (strain Manfredo), this protein is UDP-N-acetylglucosamine--N-acetylmuramyl-(pentapeptide) pyrophosphoryl-undecaprenol N-acetylglucosamine transferase.